The following is a 126-amino-acid chain: Fatty acid-binding protein, liver (126 aa).

Residue alanine 2 is modified to N-acetylalanine.

Belongs to the calycin superfamily. Fatty-acid binding protein (FABP) family.

It localises to the cytoplasm. In terms of biological role, binds free fatty acids and their coenzyme A derivatives, bilirubin, and some other small molecules in the cytoplasm. May be involved in intracellular lipid transport. This chain is Fatty acid-binding protein, liver (fabp1), found in Schroederichthys bivius (Narrowmouthed catshark).